Here is a 236-residue protein sequence, read N- to C-terminus: Osmoprotectant import permease protein OsmY (236 aa).

6 helical membrane-spanning segments follow: residues Val9–Leu29, Leu47–Leu67, Val95–Phe115, Thr126–Met146, Pro180–Leu200, and Ile207–Phe227. Residues Gly43–Leu224 form the ABC transmembrane type-1 domain.

The protein belongs to the binding-protein-dependent transport system permease family. The complex is composed of two ATP-binding proteins (OsmV), two transmembrane proteins (OsmW and OsmY) and a solute-binding protein (OsmX).

The protein resides in the cell inner membrane. Functionally, part of the OsmU ABC transporter complex, which is involved in the uptake of osmoprotectants such as choline-O-sulfate and glycine betaine. Probably responsible for the translocation of the substrate across the membrane. The polypeptide is Osmoprotectant import permease protein OsmY (osmY) (Salmonella typhimurium (strain LT2 / SGSC1412 / ATCC 700720)).